The primary structure comprises 297 residues: 4-diphosphocytidyl-2-C-methyl-D-erythritol kinase (297 aa).

Lysine 10 is an active-site residue. An ATP-binding site is contributed by 95–105 (PVAGGMAGGSA). Aspartate 137 is an active-site residue.

Belongs to the GHMP kinase family. IspE subfamily.

The catalysed reaction is 4-CDP-2-C-methyl-D-erythritol + ATP = 4-CDP-2-C-methyl-D-erythritol 2-phosphate + ADP + H(+). Its pathway is isoprenoid biosynthesis; isopentenyl diphosphate biosynthesis via DXP pathway; isopentenyl diphosphate from 1-deoxy-D-xylulose 5-phosphate: step 3/6. Its function is as follows. Catalyzes the phosphorylation of the position 2 hydroxy group of 4-diphosphocytidyl-2C-methyl-D-erythritol. The protein is 4-diphosphocytidyl-2-C-methyl-D-erythritol kinase of Streptomyces avermitilis (strain ATCC 31267 / DSM 46492 / JCM 5070 / NBRC 14893 / NCIMB 12804 / NRRL 8165 / MA-4680).